A 463-amino-acid chain; its full sequence is Glutamyl-tRNA reductase (463 aa).

Substrate-binding positions include 49–52 (TCNR), Ser109, 114–116 (EQQ), and Gln120. Cys50 functions as the Nucleophile in the catalytic mechanism. 196–201 (GAGAMS) contributes to the NADP(+) binding site.

This sequence belongs to the glutamyl-tRNA reductase family. In terms of assembly, homodimer.

It catalyses the reaction (S)-4-amino-5-oxopentanoate + tRNA(Glu) + NADP(+) = L-glutamyl-tRNA(Glu) + NADPH + H(+). Its pathway is porphyrin-containing compound metabolism; protoporphyrin-IX biosynthesis; 5-aminolevulinate from L-glutamyl-tRNA(Glu): step 1/2. In terms of biological role, catalyzes the NADPH-dependent reduction of glutamyl-tRNA(Glu) to glutamate 1-semialdehyde (GSA). This Corynebacterium glutamicum (strain R) protein is Glutamyl-tRNA reductase.